An 890-amino-acid chain; its full sequence is DNA mismatch repair protein MutS (890 aa).

645 to 652 (GPNMAGKS) serves as a coordination point for ATP.

Belongs to the DNA mismatch repair MutS family.

This protein is involved in the repair of mismatches in DNA. It is possible that it carries out the mismatch recognition step. This protein has a weak ATPase activity. This is DNA mismatch repair protein MutS from Rickettsia conorii (strain ATCC VR-613 / Malish 7).